Reading from the N-terminus, the 471-residue chain is Anthocyanidin 3-O-glucosyltransferase (471 aa).

The active-site Proton acceptor is His-24. His-24 is an an anthocyanidin binding site. The Charge relay role is filled by Asp-130. Thr-152 provides a ligand contact to UDP-alpha-D-glucose. His-161 contacts an anthocyanidin. The UDP-alpha-D-glucose site is built by Ala-352, Gln-354, His-369, Trp-372, Ser-374, and Glu-377. Gly-392 contacts an anthocyanidin. Residues Asp-393 and Gln-394 each coordinate UDP-alpha-D-glucose.

It belongs to the UDP-glycosyltransferase family.

The catalysed reaction is an anthocyanidin + UDP-alpha-D-glucose + H(+) = an anthocyanidin 3-O-beta-D-glucoside + UDP. It functions in the pathway pigment biosynthesis; anthocyanin biosynthesis. Its function is as follows. In the presence of other necessary color factors, this glycosylation reaction allows the accumulation of anthocyanin pigments. The sequence is that of Anthocyanidin 3-O-glucosyltransferase (BZ1) from Zea mays (Maize).